A 343-amino-acid polypeptide reads, in one-letter code: Methylthioribose-1-phosphate isomerase (343 aa).

Substrate is bound by residues 44–46 (RGA), R85, and Q192. D233 acts as the Proton donor in catalysis. 243–244 (NK) provides a ligand contact to substrate.

The protein belongs to the eIF-2B alpha/beta/delta subunits family. MtnA subfamily.

It carries out the reaction 5-(methylsulfanyl)-alpha-D-ribose 1-phosphate = 5-(methylsulfanyl)-D-ribulose 1-phosphate. The protein operates within amino-acid biosynthesis; L-methionine biosynthesis via salvage pathway; L-methionine from S-methyl-5-thio-alpha-D-ribose 1-phosphate: step 1/6. Functionally, catalyzes the interconversion of methylthioribose-1-phosphate (MTR-1-P) into methylthioribulose-1-phosphate (MTRu-1-P). In Carboxydothermus hydrogenoformans (strain ATCC BAA-161 / DSM 6008 / Z-2901), this protein is Methylthioribose-1-phosphate isomerase.